Consider the following 810-residue polypeptide: Zinc finger CCCH domain-containing protein 11A (810 aa).

3 consecutive C3H1-type zinc fingers follow at residues 2–29 (PNQG…HCEA), 31–57 (IGNE…HMEI), and 60–86 (KRSE…HHNR). Position 108 is a phosphoserine (S108). Glycyl lysine isopeptide (Lys-Gly) (interchain with G-Cter in SUMO2) cross-links involve residues K114 and K124. Residue S132 is modified to Phosphoserine. Disordered stretches follow at residues 139-194 (MKVE…GLRV), 223-258 (KKMK…ENVR), 285-351 (GKRK…DKVN), and 367-432 (ERAS…TTCI). A Glycyl lysine isopeptide (Lys-Gly) (interchain with G-Cter in SUMO2) cross-link involves residue K140. S149 and S171 each carry phosphoserine. The segment covering 160-175 (ADDDEDDDDQFSEEGD) has biased composition (acidic residues). A Phosphoserine modification is found at S290. 2 stretches are compositionally biased toward basic and acidic residues: residues 309-322 (KKVE…DKTP) and 367-390 (ERAS…KTDD). Residue T321 is modified to Phosphothreonine. A coiled-coil region spans residues 362–423 (EEILLERASQ…KHRQQEAERQ (62 aa)). S370 is subject to Phosphoserine. Residues 391 to 402 (STSGARSSSTIR) show a composition bias toward polar residues. Positions 417–432 (QQEAERQKSKKDTTCI) are enriched in basic and acidic residues. K478 is covalently cross-linked (Glycyl lysine isopeptide (Lys-Gly) (interchain with G-Cter in SUMO2)). A disordered region spans residues 482-549 (ALRVQQSSES…KEASGETTGV (68 aa)). The span at 486 to 498 (QQSSESSTSSPSQ) shows a compositional bias: low complexity. Residue K619 forms a Glycyl lysine isopeptide (Lys-Gly) (interchain with G-Cter in SUMO2) linkage. Positions 715–768 (TVPEAENPRDSLVLPPTQSSSDSSPPEVSGPSSSQMSMKTRRLSSASTGKPPLS) are disordered. Positions 729–748 (PPTQSSSDSSPPEVSGPSSS) are enriched in low complexity. Residues 749 to 762 (QMSMKTRRLSSAST) are compositionally biased toward polar residues.

In terms of assembly, interacts with TREX complex components THOC2, DDX39 and POLDIP3; the interactions are ATP-dependent. Interacts with PABPN1; this interaction retains ZC3H11A in nuclear speckles. Interacts with KPNA3.

The protein localises to the nucleus. It is found in the nucleus speckle. Through its association with TREX complex components, may participate in the export and post-transcriptional coordination of selected mRNA transcripts, including those required to maintain the metabolic processes in embryonic cells. Binds RNA. In terms of biological role, (Microbial infection) Plays a role in efficient growth of several nuclear-replicating viruses such as HIV-1, influenza virus or herpes simplex virus 1/HHV-1. Required for efficient viral mRNA export. May be required for proper polyadenylation of adenovirus type 5/HAdV-5 capsid mRNA. The sequence is that of Zinc finger CCCH domain-containing protein 11A (ZC3H11A) from Homo sapiens (Human).